Here is a 210-residue protein sequence, read N- to C-terminus: Large ribosomal subunit protein uL3 (210 aa).

The tract at residues threonine 134–proline 153 is disordered. Position 151 is an N5-methylglutamine (glutamine 151).

Belongs to the universal ribosomal protein uL3 family. Part of the 50S ribosomal subunit. Forms a cluster with proteins L14 and L19. In terms of processing, methylated by PrmB.

Its function is as follows. One of the primary rRNA binding proteins, it binds directly near the 3'-end of the 23S rRNA, where it nucleates assembly of the 50S subunit. The sequence is that of Large ribosomal subunit protein uL3 from Aeromonas salmonicida (strain A449).